Consider the following 60-residue polypeptide: Homeobox protein CHOX-CAD2 (60 aa).

Residues 1–60 (KEKYRVVYTDHQRLELEKEFHCNRYITIRRKSELAVNLGLSERQVKSWFQNRRAKERKII) constitute a DNA-binding region (homeobox).

It belongs to the Caudal homeobox family.

Its subcellular location is the nucleus. The protein is Homeobox protein CHOX-CAD2 (CHOX-CAD2) of Gallus gallus (Chicken).